Consider the following 382-residue polypeptide: Alkanesulfonate monooxygenase (382 aa).

The protein belongs to the SsuD family. Homotetramer.

It catalyses the reaction an alkanesulfonate + FMNH2 + O2 = an aldehyde + FMN + sulfite + H2O + 2 H(+). In terms of biological role, catalyzes the desulfonation of aliphatic sulfonates. The chain is Alkanesulfonate monooxygenase from Yersinia pseudotuberculosis serotype O:1b (strain IP 31758).